A 188-amino-acid chain; its full sequence is Translocon-associated protein subunit beta (188 aa).

An N-terminal signal peptide occupies residues 1–15 (MKFSLFALLFVVVSC). At 16-151 (VDVGTQTRDA…EYDRRFAPKY (136 aa)) the chain is on the lumenal side. N-linked (GlcNAc...) asparagine glycans are attached at residues Asn-93 and Asn-109. The helical transmembrane segment at 152-172 (TYFLVFFLIVAPTTLGSFLLF) threads the bilayer. Over 173–188 (QQSKARFPNVIKKKST) the chain is Cytoplasmic.

It belongs to the TRAP-beta family. Heterotetramer of TRAP-alpha, TRAP-beta, TRAP-delta and TRAP-gamma.

It is found in the endoplasmic reticulum membrane. Functionally, TRAP proteins are part of a complex whose function is to bind calcium to the ER membrane and thereby regulate the retention of ER resident proteins. This chain is Translocon-associated protein subunit beta, found in Caenorhabditis elegans.